The chain runs to 469 residues: Protein DETOXIFICATION 18 (469 aa).

The next 12 membrane-spanning stretches (helical) occupy residues 40–60 (LPMI…VMFA), 73–93 (LANS…SGAL), 121–141 (LVFT…FLLL), 152–172 (ALYM…QNIL), 183–203 (PLVL…YALV), 206–226 (AGLG…IAFV), 252–274 (HVVL…YWAF), 293–313 (LVAI…GLSA), 344–364 (VLAL…VGLF), 374–394 (FASL…QGVL), 406–426 (LATV…SVLC), and 438–458 (WIGL…MTIF).

It belongs to the multi antimicrobial extrusion (MATE) (TC 2.A.66.1) family.

Its subcellular location is the membrane. This chain is Protein DETOXIFICATION 18, found in Arabidopsis thaliana (Mouse-ear cress).